Reading from the N-terminus, the 515-residue chain is Putative ammonium transporter 2 (515 aa).

Transmembrane regions (helical) follow at residues glycine 34–leucine 54, valine 72–glycine 92, glycine 124–valine 144, serine 156–tryptophan 176, alanine 191–leucine 211, valine 226–phenylalanine 246, alanine 266–leucine 286, isoleucine 291–cysteine 311, leucine 321–threonine 337, valine 346–phenylalanine 366, phenylalanine 381–leucine 401, and phenylalanine 404–isoleucine 424.

It belongs to the ammonia transporter channel (TC 1.A.11.2) family.

The protein localises to the membrane. In terms of biological role, involved in the uptake of ammonia. Implicated in aging. The sequence is that of Putative ammonium transporter 2 (amt-2) from Caenorhabditis elegans.